Consider the following 692-residue polypeptide: Elongation factor G (692 aa).

The tr-type G domain occupies 8 to 283 (NRIRNIGIAA…AVIDYLPAPT (276 aa)). GTP is bound by residues 17-24 (AHIDAGKT), 81-85 (DTPGH), and 135-138 (NKMD).

It belongs to the TRAFAC class translation factor GTPase superfamily. Classic translation factor GTPase family. EF-G/EF-2 subfamily.

Its subcellular location is the cytoplasm. Its function is as follows. Catalyzes the GTP-dependent ribosomal translocation step during translation elongation. During this step, the ribosome changes from the pre-translocational (PRE) to the post-translocational (POST) state as the newly formed A-site-bound peptidyl-tRNA and P-site-bound deacylated tRNA move to the P and E sites, respectively. Catalyzes the coordinated movement of the two tRNA molecules, the mRNA and conformational changes in the ribosome. In Helicobacter pylori (strain J99 / ATCC 700824) (Campylobacter pylori J99), this protein is Elongation factor G (fusA).